We begin with the raw amino-acid sequence, 138 residues long: Basic phospholipase A2 sistruxin B (138 aa).

The signal sequence occupies residues 1-16 (MRALWIVAVLLVGVEG). 7 disulfide bridges follow: Cys-42-Cys-131, Cys-44-Cys-60, Cys-59-Cys-111, Cys-65-Cys-138, Cys-66-Cys-104, Cys-73-Cys-97, and Cys-91-Cys-102. The Ca(2+) site is built by Tyr-43, Gly-45, and Gly-47. Residue His-63 is part of the active site. Asp-64 contributes to the Ca(2+) binding site. Asp-105 is a catalytic residue.

In terms of assembly, heterodimer of an acidic subunit and a basic chain. The acidic subunit is non-toxic, without enzymatic activity and comprises 3 peptides that are cross-linked by 7 disulfide bridges. The basic subunit is toxic, has phospholipase A2 activity and is composed of a single chain. It depends on Ca(2+) as a cofactor. Expressed by the venom gland.

The protein resides in the secreted. The enzyme catalyses a 1,2-diacyl-sn-glycero-3-phosphocholine + H2O = a 1-acyl-sn-glycero-3-phosphocholine + a fatty acid + H(+). In terms of biological role, snake venom phospholipase A2 (PLA2) that shows presynaptic neurotoxicity. PLA2 catalyzes the calcium-dependent hydrolysis of the 2-acyl groups in 3-sn-phosphoglycerides. This is Basic phospholipase A2 sistruxin B from Sistrurus tergeminus (Western massasauga).